Reading from the N-terminus, the 119-residue chain is Protein TusC (119 aa).

Belongs to the DsrF/TusC family. As to quaternary structure, heterohexamer, formed by a dimer of trimers. The hexameric TusBCD complex contains 2 copies each of TusB, TusC and TusD. The TusBCD complex interacts with TusE.

It is found in the cytoplasm. Its function is as follows. Part of a sulfur-relay system required for 2-thiolation of 5-methylaminomethyl-2-thiouridine (mnm(5)s(2)U) at tRNA wobble positions. The sequence is that of Protein TusC from Klebsiella pneumoniae (strain 342).